The primary structure comprises 521 residues: Glutamate--tRNA ligase (521 aa).

Residues 13-23 carry the 'HIGH' region motif; sequence PSPSGFLHVGG. A 'KMSKS' region motif is present at residues 253–257; it reads KLSKR. Lys-256 serves as a coordination point for ATP.

It belongs to the class-I aminoacyl-tRNA synthetase family. Glutamate--tRNA ligase type 1 subfamily. As to quaternary structure, monomer.

The protein localises to the cytoplasm. The catalysed reaction is tRNA(Glu) + L-glutamate + ATP = L-glutamyl-tRNA(Glu) + AMP + diphosphate. In terms of biological role, catalyzes the attachment of glutamate to tRNA(Glu) in a two-step reaction: glutamate is first activated by ATP to form Glu-AMP and then transferred to the acceptor end of tRNA(Glu). This Leptospira interrogans serogroup Icterohaemorrhagiae serovar copenhageni (strain Fiocruz L1-130) protein is Glutamate--tRNA ligase.